Here is a 268-residue protein sequence, read N- to C-terminus: Imidazole glycerol phosphate synthase subunit HisF (268 aa).

Active-site residues include Asp-12 and Asp-131.

It belongs to the HisA/HisF family. In terms of assembly, heterodimer of HisH and HisF.

The protein resides in the cytoplasm. It catalyses the reaction 5-[(5-phospho-1-deoxy-D-ribulos-1-ylimino)methylamino]-1-(5-phospho-beta-D-ribosyl)imidazole-4-carboxamide + L-glutamine = D-erythro-1-(imidazol-4-yl)glycerol 3-phosphate + 5-amino-1-(5-phospho-beta-D-ribosyl)imidazole-4-carboxamide + L-glutamate + H(+). The protein operates within amino-acid biosynthesis; L-histidine biosynthesis; L-histidine from 5-phospho-alpha-D-ribose 1-diphosphate: step 5/9. Functionally, IGPS catalyzes the conversion of PRFAR and glutamine to IGP, AICAR and glutamate. The HisF subunit catalyzes the cyclization activity that produces IGP and AICAR from PRFAR using the ammonia provided by the HisH subunit. The sequence is that of Imidazole glycerol phosphate synthase subunit HisF from Chelativorans sp. (strain BNC1).